Here is a 192-residue protein sequence, read N- to C-terminus: UPF0312 protein Psyr_0457 (192 aa).

Positions 1 to 23 (MLKKSLAALALGTALLSAGQAMA) are cleaved as a signal peptide.

This sequence belongs to the UPF0312 family. Type 1 subfamily.

The protein localises to the periplasm. This Pseudomonas syringae pv. syringae (strain B728a) protein is UPF0312 protein Psyr_0457.